The chain runs to 623 residues: ATP-dependent lipid A-core flippase (623 aa).

The next 5 membrane-spanning stretches (helical) occupy residues 66 to 86 (LVLA…LAVI), 103 to 123 (VWFL…CNFF), 190 to 210 (LVVI…TLII), 290 to 310 (LTPL…AVAL), and 317 to 337 (ALTV…FDPI). The 283-residue stretch at 67 to 349 (VLAVLLMAGA…LTNLAGKMQK (283 aa)) folds into the ABC transmembrane type-1 domain. Residues 382 to 618 (VEFRAVSHRF…NGLYASLYNM (237 aa)) form the ABC transporter domain. Position 416 to 423 (416 to 423 (GRSGSGKT)) interacts with ATP.

This sequence belongs to the ABC transporter superfamily. Lipid exporter (TC 3.A.1.106) family. Homodimer.

The protein resides in the cell inner membrane. It carries out the reaction ATP + H2O + lipid A-core oligosaccharideSide 1 = ADP + phosphate + lipid A-core oligosaccharideSide 2.. Its function is as follows. Involved in lipopolysaccharide (LPS) biosynthesis. Translocates lipid A-core from the inner to the outer leaflet of the inner membrane. Transmembrane domains (TMD) form a pore in the inner membrane and the ATP-binding domain (NBD) is responsible for energy generation. In Bordetella bronchiseptica (strain ATCC BAA-588 / NCTC 13252 / RB50) (Alcaligenes bronchisepticus), this protein is ATP-dependent lipid A-core flippase.